We begin with the raw amino-acid sequence, 541 residues long: RING finger protein 37 (541 aa).

A U-box domain is found at 258-338 (DVPEEFLDPI…DHFLLQHSIP (81 aa)). At R451 the chain carries Asymmetric dimethylarginine. The RING-type zinc finger occupies 483–528 (CASCKRVFSPYFKKEPVYQLPCGHLLCRPCLGEKQRSLPMTCTACQ).

In terms of assembly, interacts with UBE2L3. Interacts with VCP. As to expression, expressed in liver, heart, brain, kidney and testis.

The protein localises to the nucleus. The catalysed reaction is S-ubiquitinyl-[E2 ubiquitin-conjugating enzyme]-L-cysteine + [acceptor protein]-L-lysine = [E2 ubiquitin-conjugating enzyme]-L-cysteine + N(6)-ubiquitinyl-[acceptor protein]-L-lysine.. It participates in protein modification; protein ubiquitination. Functionally, may have a ubiquitin-protein ligase activity acting as an E3 ubiquitin-protein ligase or as a ubiquitin-ubiquitin ligase promoting elongation of ubiquitin chains on substrates. This is RING finger protein 37 from Homo sapiens (Human).